Reading from the N-terminus, the 627-residue chain is 1-deoxy-D-xylulose-5-phosphate synthase (627 aa).

Thiamine diphosphate-binding positions include histidine 74 and glycine 115–alanine 117. Mg(2+) is bound at residue aspartate 146. Residues alanine 147 to alanine 148, asparagine 175, phenylalanine 284, and glutamate 364 each bind thiamine diphosphate. Asparagine 175 serves as a coordination point for Mg(2+).

Belongs to the transketolase family. DXPS subfamily. In terms of assembly, homodimer. Mg(2+) is required as a cofactor. Requires thiamine diphosphate as cofactor.

It carries out the reaction D-glyceraldehyde 3-phosphate + pyruvate + H(+) = 1-deoxy-D-xylulose 5-phosphate + CO2. It functions in the pathway metabolic intermediate biosynthesis; 1-deoxy-D-xylulose 5-phosphate biosynthesis; 1-deoxy-D-xylulose 5-phosphate from D-glyceraldehyde 3-phosphate and pyruvate: step 1/1. In terms of biological role, catalyzes the acyloin condensation reaction between C atoms 2 and 3 of pyruvate and glyceraldehyde 3-phosphate to yield 1-deoxy-D-xylulose-5-phosphate (DXP). The protein is 1-deoxy-D-xylulose-5-phosphate synthase of Acidobacterium capsulatum (strain ATCC 51196 / DSM 11244 / BCRC 80197 / JCM 7670 / NBRC 15755 / NCIMB 13165 / 161).